The sequence spans 343 residues: UDP-N-acetylglucosamine--N-acetylmuramyl-(pentapeptide) pyrophosphoryl-undecaprenol N-acetylglucosamine transferase (343 aa).

UDP-N-acetyl-alpha-D-glucosamine is bound by residues Thr10–Gly12, Asn113, Ser174, and Gln275.

Belongs to the glycosyltransferase 28 family. MurG subfamily.

The protein resides in the cell membrane. The catalysed reaction is di-trans,octa-cis-undecaprenyl diphospho-N-acetyl-alpha-D-muramoyl-L-alanyl-D-glutamyl-meso-2,6-diaminopimeloyl-D-alanyl-D-alanine + UDP-N-acetyl-alpha-D-glucosamine = di-trans,octa-cis-undecaprenyl diphospho-[N-acetyl-alpha-D-glucosaminyl-(1-&gt;4)]-N-acetyl-alpha-D-muramoyl-L-alanyl-D-glutamyl-meso-2,6-diaminopimeloyl-D-alanyl-D-alanine + UDP + H(+). Its pathway is cell wall biogenesis; peptidoglycan biosynthesis. Functionally, cell wall formation. Catalyzes the transfer of a GlcNAc subunit on undecaprenyl-pyrophosphoryl-MurNAc-pentapeptide (lipid intermediate I) to form undecaprenyl-pyrophosphoryl-MurNAc-(pentapeptide)GlcNAc (lipid intermediate II). The protein is UDP-N-acetylglucosamine--N-acetylmuramyl-(pentapeptide) pyrophosphoryl-undecaprenol N-acetylglucosamine transferase of Wolbachia sp. subsp. Drosophila simulans (strain wRi).